The following is a 2059-amino-acid chain: Non-reducing polyketide synthase stmB (2059 aa).

The Starter acyltransferase (SAT) domain occupies 7-243 (LLFGDQTVEL…LKLAAYGAVH (237 aa)). Residues 366 to 796 (SNSIAIVGMA…GGNSCLILEE (431 aa)) form the Ketosynthase family 3 (KS3) domain. Active-site for beta-ketoacyl synthase activity residues include cysteine 538, histidine 673, and histidine 713. A Malonyl-CoA:ACP transacylase (MAT) domain is found at 895 to 1185 (WVFSGQGSQY…CGSMVKATLG (291 aa)). The interval 1273–1413 (LHFVKKETVT…SASEWTDEWS (141 aa)) is N-terminal hotdog fold. Residues 1273–1581 (LHFVKKETVT…FQRMPRMVLH (309 aa)) enclose the PKS/mFAS DH domain. The active-site Proton acceptor; for dehydratase activity is the histidine 1306. The interval 1435 to 1581 (GDHLRRPVVY…FQRMPRMVLH (147 aa)) is C-terminal hotdog fold. Catalysis depends on aspartate 1495, which acts as the Proton donor; for dehydratase activity. The Carrier domain maps to 1619–1696 (PPKHDLADQL…DARRALGGDE (78 aa)). An O-(pantetheine 4'-phosphoryl)serine modification is found at serine 1656. The disordered stretch occupies residues 1693–1727 (GGDETASESENDAEGDAPSDGGSPSGSWTPISPPE). The span at 1697–1709 (TASESENDAEGDA) shows a compositional bias: acidic residues. The segment covering 1710–1719 (PSDGGSPSGS) has biased composition (low complexity). The interval 1778 to 2059 (AVEYKSNVVL…LGKLLQEAVA (282 aa)) is thioesterase (TE) domain.

The cofactor is pantetheine 4'-phosphate.

Its pathway is mycotoxin biosynthesis. Non-reducing polyketide synthase; part of the gene cluster that mediates the biosynthesis of stromemycin, a depside C-glucoside with two unsaturated C9 side chains belonging to aromatic polyketide glycosides. The HR-PKS stmA and the NR-PKS stmB act as scaffold-generating enzymes responsible for the biosynthesis of the polyketide skeleton bininalkenylresorcylic acid. StmA condenses on acetyl-CoA starter unit with 4 malonyl-CoA units and the stmB uses 3 more malonyl-CoA units and catalyzes the depside bond formation. The glycoytransferase stmC then acts as the tailoring enzyme responsible for 3-C-glucosylation of bininalkenylresorcylic acid to yield stromemycin. This chain is Non-reducing polyketide synthase stmB, found in Aspergillus ustus.